The following is a 986-amino-acid chain: Translation initiation factor IF-2 (986 aa).

Residues 47–388 (SAPAQTPHKE…RSKGRKGKYE (342 aa)) are disordered. Positions 53 to 64 (PHKEVSQEEVRV) are enriched in basic and acidic residues. Positions 78–94 (PEAASAEAASAPAAQEE) are enriched in low complexity. A compositionally biased stretch (basic and acidic residues) spans 95–113 (APQKAEPEKVEAEKAEAPK). Low complexity-rich tracts occupy residues 127–141 (EAAP…PAEA) and 153–214 (APVA…QAPA). 2 stretches are compositionally biased toward basic and acidic residues: residues 215-225 (KAEEQEPEKAT) and 268-278 (GVERPGTERPA). Residues 286 to 300 (PAGAPGRPGERPTTG) show a composition bias toward low complexity. Basic and acidic residues predominate over residues 358 to 374 (GKKDSFKDILDKRERVF). The region spanning 486-653 (KRPPVVTIMG…MVLLQADVLE (168 aa)) is the tr-type G domain. The tract at residues 495–502 (GHVDHGKT) is G1. 495-502 (GHVDHGKT) serves as a coordination point for GTP. The segment at 520-524 (GITQH) is G2. The interval 541–544 (DTPG) is G3. Residues 541–545 (DTPGH) and 595–598 (NKID) each bind GTP. A G4 region spans residues 595-598 (NKID). Residues 631–633 (SAK) are G5.

Belongs to the TRAFAC class translation factor GTPase superfamily. Classic translation factor GTPase family. IF-2 subfamily.

The protein resides in the cytoplasm. One of the essential components for the initiation of protein synthesis. Protects formylmethionyl-tRNA from spontaneous hydrolysis and promotes its binding to the 30S ribosomal subunits. Also involved in the hydrolysis of GTP during the formation of the 70S ribosomal complex. This is Translation initiation factor IF-2 from Citrifermentans bemidjiense (strain ATCC BAA-1014 / DSM 16622 / JCM 12645 / Bem) (Geobacter bemidjiensis).